Here is a 501-residue protein sequence, read N- to C-terminus: Ribose import ATP-binding protein RbsA (501 aa).

2 ABC transporter domains span residues 5 to 241 (LQLK…VGRK) and 252 to 495 (APGE…VGKL). 37–44 (GENGAGKS) provides a ligand contact to ATP.

The protein belongs to the ABC transporter superfamily. Ribose importer (TC 3.A.1.2.1) family. The complex is composed of an ATP-binding protein (RbsA), two transmembrane proteins (RbsC) and a solute-binding protein (RbsB).

It localises to the cell inner membrane. It carries out the reaction D-ribose(out) + ATP + H2O = D-ribose(in) + ADP + phosphate + H(+). Part of the ABC transporter complex RbsABC involved in ribose import. Responsible for energy coupling to the transport system. This chain is Ribose import ATP-binding protein RbsA, found in Salmonella typhi.